Reading from the N-terminus, the 146-residue chain is Coactosin (146 aa).

In terms of domain architecture, ADF-H spans 1–132; the sequence is MADVSSTELK…NEEELMTKVR (132 aa).

The protein belongs to the actin-binding proteins ADF family. Coactosin subfamily. In terms of processing, the N-terminus is blocked.

It localises to the cytoplasm. The protein resides in the cytoskeleton. Functionally, binds to F-actin in a calcium independent manner. Binds to the filaments along their length. The sequence is that of Coactosin (coaA) from Dictyostelium discoideum (Social amoeba).